The following is a 427-amino-acid chain: Serine hydroxymethyltransferase (427 aa).

(6S)-5,6,7,8-tetrahydrofolate-binding positions include leucine 124 and 128–130; that span reads GHL. The residue at position 233 (lysine 233) is an N6-(pyridoxal phosphate)lysine.

Belongs to the SHMT family. As to quaternary structure, homodimer. The cofactor is pyridoxal 5'-phosphate.

The protein resides in the cytoplasm. The enzyme catalyses (6R)-5,10-methylene-5,6,7,8-tetrahydrofolate + glycine + H2O = (6S)-5,6,7,8-tetrahydrofolate + L-serine. The protein operates within one-carbon metabolism; tetrahydrofolate interconversion. It functions in the pathway amino-acid biosynthesis; glycine biosynthesis; glycine from L-serine: step 1/1. Its function is as follows. Catalyzes the reversible interconversion of serine and glycine with tetrahydrofolate (THF) serving as the one-carbon carrier. This reaction serves as the major source of one-carbon groups required for the biosynthesis of purines, thymidylate, methionine, and other important biomolecules. Also exhibits THF-independent aldolase activity toward beta-hydroxyamino acids, producing glycine and aldehydes, via a retro-aldol mechanism. This is Serine hydroxymethyltransferase from Paracoccus denitrificans (strain Pd 1222).